Reading from the N-terminus, the 142-residue chain is MAP3K7 C-terminal-like protein (142 aa).

Ubiquitous.

The protein is MAP3K7 C-terminal-like protein (Map3k7cl) of Mus musculus (Mouse).